The following is a 411-amino-acid chain: Coiled-coil domain-containing protein 159 (411 aa).

Positions 84-113 (EQAGKSGAWEKEWDSEPQPHEGTPCSSSDV) are disordered. Basic and acidic residues predominate over residues 91–102 (AWEKEWDSEPQP). Residues 269–305 (EELELVREEVTFIYQKLQDQEDEISENLLNIQKMQKT) adopt a coiled-coil conformation. Residues 372 to 411 (RASSLRGQKGHQCKSSQCPSWDSDSDWERPFSKSGSYPPA) form a disordered region. A compositionally biased stretch (polar residues) spans 384–393 (CKSSQCPSWD).

In terms of assembly, interacts with DYNLT2. Interacts with GGNBP1. Interacts with OSBP2. Expressed in spermatids but undetectable in the spermatozoon (at protein level). Highly expressed in the testis (at protein level).

Its function is as follows. Functions during spermatid development; may participate in the centrosome reduction procedure of spermatids and is required for the formation of the connecting piece/sperm head-tail coupling apparatus (HTCA) and the correct and tight attachment of the flagellum to the nuclear envelope. The polypeptide is Coiled-coil domain-containing protein 159 (Ccdc159) (Mus musculus (Mouse)).